A 158-amino-acid polypeptide reads, in one-letter code: Transcription elongation factor GreA (158 aa).

Residues alanine 47–aspartate 74 are a coiled coil.

The protein belongs to the GreA/GreB family.

Functionally, necessary for efficient RNA polymerase transcription elongation past template-encoded arresting sites. The arresting sites in DNA have the property of trapping a certain fraction of elongating RNA polymerases that pass through, resulting in locked ternary complexes. Cleavage of the nascent transcript by cleavage factors such as GreA or GreB allows the resumption of elongation from the new 3'terminus. GreA releases sequences of 2 to 3 nucleotides. The sequence is that of Transcription elongation factor GreA from Bradyrhizobium sp. (strain BTAi1 / ATCC BAA-1182).